The following is a 445-amino-acid chain: MAITVRRSTMVRPAAERPRERLWNSNLDLVVPRFHTPSVYFYRRPDAGAGAGPGAAEGFFDAERMRRALAEALVPFYPMAGRLARDEDGRVEIDCSGEGVLFVEARAPGAAVDDYGDFAPTMELKRLIPAVDYSGDISSFPLLVLQVTYFKCGGVSLGVGMQHHVADGMSGLHFINSWSDLCRGAQIAVMPFIDRTLLRARDPPTPSYTHVEYQPAPAMLSSAPQALTGKPTLAPTAVDIFKLTRSELGRLRAQLPTGEGAPRFSTYAVLAAHVWRCVSLARGLPAEQPTKLYCATDGRHRLQPPLPEGYFGNVIFTATPLAEAGKVTGAVADGAAVIQGALDRMSDDYCRSALDYLETQPDLSALVRGAHTFRCPNLGLTSWVRLPIHDADFGWGRPVFMGPGGIAYEGLAFVLPSANKDGSLSIAISLQAEHMEKFRKLIADV.

Belongs to the plant acyltransferase family.

It catalyses the reaction 5-hydroxyanthranilate + (E)-4-coumaroyl-CoA = avenanthramide A + CoA. The catalysed reaction is 5-hydroxyanthranilate + (E)-caffeoyl-CoA = avenanthramide C + CoA. Its function is as follows. Involved in the biosynthesis of avenanthramide phytoalexins, which are phenolic alkaloids found mainly in oats. Catalyzes the N-acylation of 5-hydroxyanthranilate with 4-coumaroyl-CoA or caffeoyl-CoA as acyl donors, forming avenanthramide A and avenanthramide C, respectively. Does not accept feruloyl-CoA as a substrate. This Avena sativa (Oat) protein is Hydroxycinnamoyl-CoA:5-hydroxyanthranilate N-hydroxycinnamoyltransferase HHT4.